The primary structure comprises 141 residues: Large ribosomal subunit protein uL22 (141 aa).

The tract at residues 110 to 141 is disordered; the sequence is EEKKTVAKKTTTTKAPAKKTTSTKKATAKKES. Residues 117-134 show a composition bias toward low complexity; the sequence is KKTTTTKAPAKKTTSTKK.

This sequence belongs to the universal ribosomal protein uL22 family. Part of the 50S ribosomal subunit.

This protein binds specifically to 23S rRNA; its binding is stimulated by other ribosomal proteins, e.g. L4, L17, and L20. It is important during the early stages of 50S assembly. It makes multiple contacts with different domains of the 23S rRNA in the assembled 50S subunit and ribosome. In terms of biological role, the globular domain of the protein is located near the polypeptide exit tunnel on the outside of the subunit, while an extended beta-hairpin is found that lines the wall of the exit tunnel in the center of the 70S ribosome. This chain is Large ribosomal subunit protein uL22, found in Campylobacter jejuni subsp. doylei (strain ATCC BAA-1458 / RM4099 / 269.97).